Here is a 357-residue protein sequence, read N- to C-terminus: Chorismate synthase (357 aa).

Position 47 (R47) interacts with NADP(+). FMN is bound by residues 123 to 125 (RSS), G281, 296 to 300 (KPTSS), and R324.

The protein belongs to the chorismate synthase family. Homotetramer. It depends on FMNH2 as a cofactor.

It carries out the reaction 5-O-(1-carboxyvinyl)-3-phosphoshikimate = chorismate + phosphate. It functions in the pathway metabolic intermediate biosynthesis; chorismate biosynthesis; chorismate from D-erythrose 4-phosphate and phosphoenolpyruvate: step 7/7. Functionally, catalyzes the anti-1,4-elimination of the C-3 phosphate and the C-6 proR hydrogen from 5-enolpyruvylshikimate-3-phosphate (EPSP) to yield chorismate, which is the branch point compound that serves as the starting substrate for the three terminal pathways of aromatic amino acid biosynthesis. This reaction introduces a second double bond into the aromatic ring system. The sequence is that of Chorismate synthase from Chlamydia muridarum (strain MoPn / Nigg).